Here is a 166-residue protein sequence, read N- to C-terminus: Ribosome maturation factor RimM (166 aa).

A PRC barrel domain is found at 94–166; that stretch reads EDEFYITDLN…AILNYKRDEL (73 aa).

Belongs to the RimM family. As to quaternary structure, binds ribosomal protein uS19.

The protein resides in the cytoplasm. Functionally, an accessory protein needed during the final step in the assembly of 30S ribosomal subunit, possibly for assembly of the head region. Essential for efficient processing of 16S rRNA. May be needed both before and after RbfA during the maturation of 16S rRNA. It has affinity for free ribosomal 30S subunits but not for 70S ribosomes. The sequence is that of Ribosome maturation factor RimM from Rickettsia bellii (strain RML369-C).